A 376-amino-acid chain; its full sequence is 23S rRNA (uracil(747)-C(5))-methyltransferase RlmC (376 aa).

4 residues coordinate [4Fe-4S] cluster: C3, C11, C14, and C87. The S-adenosyl-L-methionine site is built by Q212, F241, E262, and N307. C334 acts as the Nucleophile in catalysis.

Belongs to the class I-like SAM-binding methyltransferase superfamily. RNA M5U methyltransferase family. RlmC subfamily.

The enzyme catalyses uridine(747) in 23S rRNA + S-adenosyl-L-methionine = 5-methyluridine(747) in 23S rRNA + S-adenosyl-L-homocysteine + H(+). Catalyzes the formation of 5-methyl-uridine at position 747 (m5U747) in 23S rRNA. The sequence is that of 23S rRNA (uracil(747)-C(5))-methyltransferase RlmC from Yersinia pestis bv. Antiqua (strain Antiqua).